We begin with the raw amino-acid sequence, 60 residues long: Mastoparan-VT4 (60 aa).

An N-terminal signal peptide occupies residues 1–27 (MKNPILILFTAFIALLGFFGMSAEALA). AXPX repeat units lie at residues 27 to 30 (ADPK), 31 to 34 (ADPL), 35 to 38 (AGPN), and 41 to 44 (ADPE). The propeptide occupies 28-45 (DPKADPLAGPNPDADPEA). Leucine 59 carries the leucine amide modification.

Belongs to the MCD family. Mastoparan subfamily. Expressed by the venom gland.

The protein resides in the secreted. The synthetic peptide shows antimicrobial activities against Gram-negative bacteria (but not against all strains tested), Gram-positive bacteria (not all strains tested) and the fungi C.albicans and C.parapsilosis. Exhibits little hemolytic activity against washed human erythrocytes. The polypeptide is Mastoparan-VT4 (Vespa tropica (Greater banded hornet)).